The sequence spans 649 residues: Quinol oxidase subunit 1 (649 aa).

Topologically, residues Met1–Asp13 are extracellular. A helical membrane pass occupies residues Pro14–Leu34. The Cytoplasmic portion of the chain corresponds to Thr35–Lys55. A helical membrane pass occupies residues Leu56–Leu76. Over Met77–Thr104 the chain is Extracellular. His102 provides a ligand contact to Fe(II)-heme a. The chain crosses the membrane as a helical span at residues Ile105–Leu125. The Cytoplasmic segment spans residues Gln126 to Asn139. The helical transmembrane segment at Leu140–Gly160 threads the bilayer. Residues Ser161–Leu187 are Extracellular-facing. The chain crosses the membrane as a helical span at residues Leu188–Ile208. The Cytoplasmic portion of the chain corresponds to Leu209 to Thr228. A helical membrane pass occupies residues Leu229–Leu249. The Extracellular segment spans residues Ser250–Asn273. Residues Leu274–Phe294 form a helical membrane-spanning segment. Cu cation is bound by residues His280 and Tyr284. The 1'-histidyl-3'-tyrosine (His-Tyr) cross-link spans His280–Tyr284. Residues Ser295–Gln305 are Cytoplasmic-facing. Residues Leu306–Val326 traverse the membrane as a helical segment. Topologically, residues Trp327–Ser342 are extracellular. His329 and His330 together coordinate Cu cation. The chain crosses the membrane as a helical span at residues Phe343–Leu363. The Cytoplasmic portion of the chain corresponds to Phe364–Pro376. Residues Met377–Leu397 form a helical membrane-spanning segment. The Extracellular portion of the chain corresponds to Ala398 to His415. A heme a3-binding site is contributed by His415. A helical membrane pass occupies residues Phe416–Tyr436. Residue His417 coordinates Fe(II)-heme a. The Cytoplasmic segment spans residues Pro437 to Trp451. The helical transmembrane segment at Phe452–Leu472 threads the bilayer. Over Gln473–Asn492 the chain is Extracellular. Residues Phe493–Ile513 traverse the membrane as a helical segment. The Cytoplasmic segment spans residues Tyr514 to Asn585. The chain crosses the membrane as a helical span at residues Ser586–Leu603. Residues Val604–Glu606 are Extracellular-facing. The chain crosses the membrane as a helical span at residues Trp607–Leu624. Over Arg625–Glu649 the chain is Cytoplasmic.

It belongs to the heme-copper respiratory oxidase family. The cofactor is Cu cation. It depends on ferriheme a as a cofactor. Requires Heme A3. as cofactor.

Its subcellular location is the cell membrane. The catalysed reaction is 2 a quinol + O2 = 2 a quinone + 2 H2O. The protein operates within energy metabolism; oxidative phosphorylation. Its function is as follows. Catalyzes quinol oxidation with the concomitant reduction of oxygen to water. Major component for energy conversion during vegetative growth. In Bacillus spizizenii (strain ATCC 23059 / NRRL B-14472 / W23) (Bacillus subtilis subsp. spizizenii), this protein is Quinol oxidase subunit 1 (qoxB).